The primary structure comprises 439 residues: Probable tRNA pseudouridine synthase D (439 aa).

Residue Asp87 is the Nucleophile of the active site. The TRUD domain occupies 166 to 391; it reads GVPNFFGIQR…SKGLRREILL (226 aa).

The protein belongs to the pseudouridine synthase TruD family.

It catalyses the reaction uridine(13) in tRNA = pseudouridine(13) in tRNA. Its function is as follows. Could be responsible for synthesis of pseudouridine from uracil-13 in transfer RNAs. The protein is Probable tRNA pseudouridine synthase D of Methanococcoides burtonii (strain DSM 6242 / NBRC 107633 / OCM 468 / ACE-M).